A 333-amino-acid chain; its full sequence is Probable tRNA pseudouridine synthase B (333 aa).

Asp66 functions as the Nucleophile in the catalytic mechanism. Residues 233–308 enclose the PUA domain; the sequence is LKKIIVKDSA…EVVEITRVIM (76 aa).

Belongs to the pseudouridine synthase TruB family. Type 2 subfamily.

The enzyme catalyses uridine(55) in tRNA = pseudouridine(55) in tRNA. Functionally, could be responsible for synthesis of pseudouridine from uracil-55 in the psi GC loop of transfer RNAs. The polypeptide is Probable tRNA pseudouridine synthase B (Methanococcus maripaludis (strain C6 / ATCC BAA-1332)).